A 393-amino-acid chain; its full sequence is Putative N(4)-(beta-N-acetylglucosaminyl)-L-asparaginase GM21137 (393 aa).

Residues M1–A23 form the signal peptide. 2 disulfides stabilise this stretch: C97–C102 and C196–C212. T243 functions as the Nucleophile in the catalytic mechanism. Substrate is bound by residues R271 to D274 and T294 to G297. A disulfide bridge connects residues C354 and C381.

The protein belongs to the Ntn-hydrolase family. Heterotetramer of two alpha and two beta chains arranged as a dimer of alpha/beta heterodimers. Post-translationally, cleaved into an alpha and beta chain by autocatalysis; this activates the enzyme. The N-terminal residue of the beta subunit is responsible for the nucleophile hydrolase activity.

The catalysed reaction is N(4)-(beta-N-acetyl-D-glucosaminyl)-L-asparagine + H2O = N-acetyl-beta-D-glucosaminylamine + L-aspartate + H(+). Cleaves the GlcNAc-Asn bond which joins oligosaccharides to the peptide of asparagine-linked glycoproteins. The protein is Putative N(4)-(beta-N-acetylglucosaminyl)-L-asparaginase GM21137 of Drosophila sechellia (Fruit fly).